The chain runs to 276 residues: 3-methyl-2-oxobutanoate hydroxymethyltransferase (276 aa).

Mg(2+)-binding residues include aspartate 44 and aspartate 83. 3-methyl-2-oxobutanoate is bound by residues 44–45, aspartate 83, and lysine 112; that span reads DS. Glutamate 114 contributes to the Mg(2+) binding site. The active-site Proton acceptor is glutamate 180. The segment at 256–276 is disordered; it reads PTEAQSSRMKPDELSRALNAE.

Belongs to the PanB family. As to quaternary structure, homodecamer; pentamer of dimers. Mg(2+) is required as a cofactor.

The protein resides in the cytoplasm. The enzyme catalyses 3-methyl-2-oxobutanoate + (6R)-5,10-methylene-5,6,7,8-tetrahydrofolate + H2O = 2-dehydropantoate + (6S)-5,6,7,8-tetrahydrofolate. The protein operates within cofactor biosynthesis; (R)-pantothenate biosynthesis; (R)-pantoate from 3-methyl-2-oxobutanoate: step 1/2. Its function is as follows. Catalyzes the reversible reaction in which hydroxymethyl group from 5,10-methylenetetrahydrofolate is transferred onto alpha-ketoisovalerate to form ketopantoate. This is 3-methyl-2-oxobutanoate hydroxymethyltransferase from Gluconacetobacter diazotrophicus (strain ATCC 49037 / DSM 5601 / CCUG 37298 / CIP 103539 / LMG 7603 / PAl5).